Here is a 375-residue protein sequence, read N- to C-terminus: Probable UDP-N-acetylglucosamine 2-epimerase (375 aa).

Belongs to the UDP-N-acetylglucosamine 2-epimerase family.

The protein localises to the cytoplasm. It carries out the reaction UDP-N-acetyl-alpha-D-glucosamine = UDP-N-acetyl-alpha-D-mannosamine. It participates in glycan metabolism; exopolysaccharide EPS I biosynthesis. In terms of biological role, may be involved in synthesis of N-acetyltrideoxygalactose, a component of exopolysaccharide EPS I which functions as a virulence factor. In Ralstonia solanacearum (Pseudomonas solanacearum), this protein is Probable UDP-N-acetylglucosamine 2-epimerase (epsC).